Reading from the N-terminus, the 236-residue chain is EEF1A lysine methyltransferase 2 (236 aa).

A compositionally biased stretch (gly residues) spans 1–11; the sequence is MSSGADGGGGA. The interval 1–31 is disordered; sequence MSSGADGGGGAAVAARSDKGSPGEDGFVPSA. An N-acetylserine modification is found at Ser2. Ser21 is subject to Phosphoserine.

It belongs to the class I-like SAM-binding methyltransferase superfamily. EFM4 family.

The protein localises to the cytoplasm. Its subcellular location is the nucleus. The enzyme catalyses L-lysyl-[protein] + 3 S-adenosyl-L-methionine = N(6),N(6),N(6)-trimethyl-L-lysyl-[protein] + 3 S-adenosyl-L-homocysteine + 3 H(+). In terms of biological role, protein-lysine methyltransferase that selectively catalyzes the trimethylation of EEF1A at 'Lys-318'. This chain is EEF1A lysine methyltransferase 2, found in Homo sapiens (Human).